Here is a 337-residue protein sequence, read N- to C-terminus: Phenylalanine--tRNA ligase alpha subunit (337 aa).

Glu-252 is a binding site for Mg(2+).

It belongs to the class-II aminoacyl-tRNA synthetase family. Phe-tRNA synthetase alpha subunit type 1 subfamily. As to quaternary structure, tetramer of two alpha and two beta subunits. Requires Mg(2+) as cofactor.

The protein localises to the cytoplasm. The enzyme catalyses tRNA(Phe) + L-phenylalanine + ATP = L-phenylalanyl-tRNA(Phe) + AMP + diphosphate + H(+). This chain is Phenylalanine--tRNA ligase alpha subunit, found in Francisella philomiragia subsp. philomiragia (strain ATCC 25017 / CCUG 19701 / FSC 153 / O#319-036).